The sequence spans 657 residues: Endoplasmic reticulum mannosyl-oligosaccharide 1,2-alpha-mannosidase (657 aa).

Residues 1-49 (MYPPPPAPAPHRDFISVTLSLGESYDNSKSRRRRSCWRKWKQLSRLQRN) are Cytoplasmic-facing. A helical transmembrane segment spans residues 50-70 (VILFVLGFLILCGFLYSLQVS). Over 71–657 (DQWKALSGSR…AHPLPIWSPA (587 aa)) the chain is Lumenal. A Phosphoserine modification is found at serine 101. The interval 118-157 (HLRRGPPHLQIRPPNTVSKDGMQDDAKEREAALGKAQQEE) is disordered. The segment covering 138 to 157 (GMQDDAKEREAALGKAQQEE) has biased composition (basic and acidic residues). Residue glutamate 288 is the Proton donor of the active site. The active site involves aspartate 421. Cysteine 485 and cysteine 514 are oxidised to a cystine. The active-site Proton donor is glutamate 528. The active site involves glutamate 557. Residue threonine 646 coordinates Ca(2+).

This sequence belongs to the glycosyl hydrolase 47 family. Ca(2+) is required as a cofactor.

The protein localises to the endoplasmic reticulum membrane. It carries out the reaction N(4)-(alpha-D-Man-(1-&gt;2)-alpha-D-Man-(1-&gt;2)-alpha-D-Man-(1-&gt;3)-[alpha-D-Man-(1-&gt;2)-alpha-D-Man-(1-&gt;3)-[alpha-D-Man-(1-&gt;2)-alpha-D-Man-(1-&gt;6)]-alpha-D-Man-(1-&gt;6)]-beta-D-Man-(1-&gt;4)-beta-D-GlcNAc-(1-&gt;4)-beta-D-GlcNAc)-L-asparaginyl-[protein] (N-glucan mannose isomer 9A1,2,3B1,2,3) + 4 H2O = N(4)-(alpha-D-Man-(1-&gt;3)-[alpha-D-Man-(1-&gt;3)-[alpha-D-Man-(1-&gt;6)]-alpha-D-Man-(1-&gt;6)]-beta-D-Man-(1-&gt;4)-beta-D-GlcNAc-(1-&gt;4)-beta-D-GlcNAc)-L-asparaginyl-[protein] (N-glucan mannose isomer 5A1,2) + 4 beta-D-mannose. The enzyme catalyses N(4)-(alpha-D-Man-(1-&gt;2)-alpha-D-Man-(1-&gt;2)-alpha-D-Man-(1-&gt;3)-[alpha-D-Man-(1-&gt;3)-[alpha-D-Man-(1-&gt;2)-alpha-D-Man-(1-&gt;6)]-alpha-D-Man-(1-&gt;6)]-beta-D-Man-(1-&gt;4)-beta-D-GlcNAc-(1-&gt;4)-beta-D-GlcNAc)-L-asparaginyl-[protein] (N-glucan mannose isomer 8A1,2,3B1,3) + 3 H2O = N(4)-(alpha-D-Man-(1-&gt;3)-[alpha-D-Man-(1-&gt;3)-[alpha-D-Man-(1-&gt;6)]-alpha-D-Man-(1-&gt;6)]-beta-D-Man-(1-&gt;4)-beta-D-GlcNAc-(1-&gt;4)-beta-D-GlcNAc)-L-asparaginyl-[protein] (N-glucan mannose isomer 5A1,2) + 3 beta-D-mannose. The protein operates within protein modification; protein glycosylation. Functionally, involved in glycoprotein quality control targeting of misfolded glycoproteins for degradation. It primarily trims a single alpha-1,2-linked mannose residue from Man(9)GlcNAc(2) to produce Man(8)GlcNAc(2), but at high enzyme concentrations, as found in the ER quality control compartment (ERQC), it further trims the carbohydrates to Man(5-6)GlcNAc(2). This Rattus norvegicus (Rat) protein is Endoplasmic reticulum mannosyl-oligosaccharide 1,2-alpha-mannosidase (Man1b1).